A 224-amino-acid polypeptide reads, in one-letter code: Rhodanese-like domain-containing protein 14, chloroplastic (224 aa).

A chloroplast-targeting transit peptide spans 1–48 (MASLTSIATPYPSSSQALRLKSSGNTLFSAGVRSAAMVSGHKTLKIQC). The Rhodanese domain maps to 87-220 (KENNFVILDV…WGKEGLPVET (134 aa)). Cys-166 acts as the Cysteine persulfide intermediate in catalysis.

It localises to the plastid. The protein localises to the chloroplast. The chain is Rhodanese-like domain-containing protein 14, chloroplastic from Arabidopsis thaliana (Mouse-ear cress).